We begin with the raw amino-acid sequence, 426 residues long: Formate-dependent phosphoribosylglycinamide formyltransferase (426 aa).

N(1)-(5-phospho-beta-D-ribosyl)glycinamide contacts are provided by residues 26-27 (EL) and glutamate 86. ATP-binding positions include arginine 118, lysine 158, 197 to 200 (EEFI), and glutamate 205. The region spanning 123 to 324 (EAIASTGART…EFALHAKAVL (202 aa)) is the ATP-grasp domain. 2 residues coordinate Mg(2+): glutamate 279 and glutamate 293. Residues aspartate 300, lysine 374, and 381–382 (RR) contribute to the N(1)-(5-phospho-beta-D-ribosyl)glycinamide site.

Belongs to the PurK/PurT family. As to quaternary structure, homodimer.

The enzyme catalyses N(1)-(5-phospho-beta-D-ribosyl)glycinamide + formate + ATP = N(2)-formyl-N(1)-(5-phospho-beta-D-ribosyl)glycinamide + ADP + phosphate + H(+). It participates in purine metabolism; IMP biosynthesis via de novo pathway; N(2)-formyl-N(1)-(5-phospho-D-ribosyl)glycinamide from N(1)-(5-phospho-D-ribosyl)glycinamide (formate route): step 1/1. Involved in the de novo purine biosynthesis. Catalyzes the transfer of formate to 5-phospho-ribosyl-glycinamide (GAR), producing 5-phospho-ribosyl-N-formylglycinamide (FGAR). Formate is provided by PurU via hydrolysis of 10-formyl-tetrahydrofolate. The polypeptide is Formate-dependent phosphoribosylglycinamide formyltransferase (Methanocella arvoryzae (strain DSM 22066 / NBRC 105507 / MRE50)).